A 142-amino-acid chain; its full sequence is Hemoglobin subunit alpha-A (142 aa).

The 141-residue stretch at valine 2–arginine 142 folds into the Globin domain. Position 59 (histidine 59) interacts with O2. Histidine 88 lines the heme b pocket.

Belongs to the globin family. As to quaternary structure, heterotetramer of two alpha chains and two beta chains. In terms of tissue distribution, red blood cells.

Its function is as follows. Involved in oxygen transport from the lung to the various peripheral tissues. This is Hemoglobin subunit alpha-A (HBAA) from Apus apus (Common swift).